The primary structure comprises 665 residues: E3 ubiquitin-protein ligase cblA (665 aa).

The tract at residues 30 to 50 (NNNNNINNNNNNNNINSNNNG) is disordered. Residues 109–231 (TSLVNYIHYE…NNENNNNNNN (123 aa)) are 4H. The 292-residue stretch at 109–400 (TSLVNYIHYE…PDIFKSILSF (292 aa)) folds into the Cbl-PTB domain. Residues 232–306 (NYNPYELLSN…FKLSVFIKWF (75 aa)) form an EF-hand-like region. Residues Asp-287, Thr-289, Asp-291, and Tyr-293 each contribute to the Ca(2+) site. Residues 307–400 (GALPVSLGIF…PDIFKSILSF (94 aa)) form an SH2-like region. Disordered stretches follow at residues 437–456 (ENNNNQNNNQNNNNNNINTF) and 467–609 (DSSN…NNNN). Residues 467 to 478 (DSSNSSDTNKSP) show a composition bias toward low complexity. Positions 479–544 (TKSRKSSFKN…NNNNNNNNNN (66 aa)) form a coiled coil. Over residues 486–512 (FKNDKDKKEKEKEKGKDKEKEKERVSD) the composition is skewed to basic and acidic residues. Low complexity-rich tracts occupy residues 530–561 (NNNNNNNNNNNNNNNNNNNNNNNNNNSSNNNN) and 571–609 (TSNGSSGNNNNNNNNNNNNNNNNNNNNSSSTTKRNNNNN). An RING-type zinc finger spans residues 618 to 653 (CTVCMDNEINTVFLECGHLSCCSLCSVKLKKCPICR).

In terms of processing, ubiquitinated.

Its subcellular location is the cytoplasm. It is found in the nucleus. The catalysed reaction is S-ubiquitinyl-[E2 ubiquitin-conjugating enzyme]-L-cysteine + [acceptor protein]-L-lysine = [E2 ubiquitin-conjugating enzyme]-L-cysteine + N(6)-ubiquitinyl-[acceptor protein]-L-lysine.. It functions in the pathway protein modification; protein ubiquitination. In terms of biological role, acts as an E3 ubiquitin-protein ligase, which accepts ubiquitin from specific E2 ubiquitin-conjugating enzymes, and then transfers it to substrates promoting their degradation by the proteasome. Up-regulates STATc tyrosine phosphorylation via an inhibitory effect on ptpC accumulation. Recognizes activated receptor tyrosine kinases, RTKs and terminates signaling. The chain is E3 ubiquitin-protein ligase cblA (cblA-1) from Dictyostelium discoideum (Social amoeba).